The primary structure comprises 313 residues: E3 ubiquitin-protein ligase SINA-like 2 (313 aa).

Positions 1 to 26 (MSGEASTSRRKRQRVPSSVESVENGG) are disordered. An RING-type zinc finger spans residues 44-80 (CPICCHALTSPIFQCDNGHIACSSCCTKLRNKCPSCA). Residues 94 to 277 (VVEAVMVTCP…LKMEICIRKL (184 aa)) form an SBD region. The SIAH-type zinc-finger motif lies at 97 to 155 (AVMVTCPNVKHGCTEKFSYGKELIHEKDCRFALCYCPAPNCNYSGVYKDLYSHFYVNHY). 8 residues coordinate Zn(2+): cysteine 102, cysteine 109, histidine 121, cysteine 125, cysteine 132, cysteine 137, histidine 149, and histidine 154. A disordered region spans residues 278–313 (KKDEEEADEDEESEEEEDDDDDDDDDDEEEDADEEE). A compositionally biased stretch (acidic residues) spans 282-313 (EEADEDEESEEEEDDDDDDDDDDEEEDADEEE).

The protein belongs to the SINA (Seven in absentia) family.

It carries out the reaction S-ubiquitinyl-[E2 ubiquitin-conjugating enzyme]-L-cysteine + [acceptor protein]-L-lysine = [E2 ubiquitin-conjugating enzyme]-L-cysteine + N(6)-ubiquitinyl-[acceptor protein]-L-lysine.. The protein operates within protein modification; protein ubiquitination. E3 ubiquitin-protein ligase that mediates ubiquitination and subsequent proteasomal degradation of target proteins. E3 ubiquitin ligases accept ubiquitin from an E2 ubiquitin-conjugating enzyme in the form of a thioester and then directly transfers the ubiquitin to targeted substrates. It probably triggers the ubiquitin-mediated degradation of different substrates. This Arabidopsis thaliana (Mouse-ear cress) protein is E3 ubiquitin-protein ligase SINA-like 2.